Reading from the N-terminus, the 572-residue chain is NADP-dependent malic enzyme (572 aa).

Position 1 is an N-acetylmethionine (Met1). Tyr102 acts as the Proton donor in catalysis. Arg155 provides a ligand contact to NADP(+). Lys173 acts as the Proton acceptor in catalysis. Glu245, Asp246, and Asp269 together coordinate a divalent metal cation. NADP(+)-binding positions include Asp269 and 301–318; that span reads GAGE…MAME. Ser336 bears the Phosphoserine mark. Asn408 lines the NADP(+) pocket.

It belongs to the malic enzymes family. As to quaternary structure, homotetramer. The cofactor is Mg(2+). Requires Mn(2+) as cofactor. As to expression, ubiquitous. Up-regulated by 3,5,3'-triiodo-L-thyronine in the liver, kidney and heart.

The protein resides in the cytoplasm. It carries out the reaction (S)-malate + NADP(+) = pyruvate + CO2 + NADPH. The enzyme catalyses oxaloacetate + H(+) = pyruvate + CO2. Functionally, catalyzes the oxidative decarboxylation of (S)-malate in the presence of NADP(+) and divalent metal ions, and decarboxylation of oxaloacetate. The polypeptide is NADP-dependent malic enzyme (Me1) (Rattus norvegicus (Rat)).